Here is a 141-residue protein sequence, read N- to C-terminus: HTH-type transcriptional regulator ZntR (141 aa).

In terms of domain architecture, HTH merR-type spans 1-70; it reads MYRIGELAKM…LESIRELLSI (70 aa). Positions 4-23 form a DNA-binding region, H-T-H motif; the sequence is IGELAKMAEVTPDTIRYYEK. 4 residues coordinate Zn(2+): Cys114, Cys115, His119, and Cys124.

Homodimer.

In terms of biological role, zinc-responsive transcriptional regulator of zntA. In Escherichia coli O157:H7, this protein is HTH-type transcriptional regulator ZntR (zntR).